The sequence spans 506 residues: Maturase K (506 aa).

It belongs to the intron maturase 2 family. MatK subfamily.

Its subcellular location is the plastid. The protein localises to the chloroplast. Its function is as follows. Usually encoded in the trnK tRNA gene intron. Probably assists in splicing its own and other chloroplast group II introns. This chain is Maturase K, found in Manihot esculenta (Cassava).